We begin with the raw amino-acid sequence, 258 residues long: MFKVRVIPCLDVKDGRVVKGINFVDLRDAGDPVEAAIAYDAAGADELCFLDITATHENRGIMLDVVRRTAEACFMPLTVGGGVRTVDDIKVLLRSGADKVSINSAAVSRREFVKEAAEKFGDQCIVVAIDAKRVKRGGGGERWEIFTHGGRNSTGIDAIEYAQEVVSLGAGEILLTSMDRDGTRQGFDIPLTSAIADSVHVPVIASGGVGTLDHLVDGIRNGHATAVLAASIFHFGEFTIRQAKDHMVRAGLPMRLDP.

Catalysis depends on residues D11 and D130.

The protein belongs to the HisA/HisF family. In terms of assembly, heterodimer of HisH and HisF.

The protein localises to the cytoplasm. The enzyme catalyses 5-[(5-phospho-1-deoxy-D-ribulos-1-ylimino)methylamino]-1-(5-phospho-beta-D-ribosyl)imidazole-4-carboxamide + L-glutamine = D-erythro-1-(imidazol-4-yl)glycerol 3-phosphate + 5-amino-1-(5-phospho-beta-D-ribosyl)imidazole-4-carboxamide + L-glutamate + H(+). The protein operates within amino-acid biosynthesis; L-histidine biosynthesis; L-histidine from 5-phospho-alpha-D-ribose 1-diphosphate: step 5/9. Functionally, IGPS catalyzes the conversion of PRFAR and glutamine to IGP, AICAR and glutamate. The HisF subunit catalyzes the cyclization activity that produces IGP and AICAR from PRFAR using the ammonia provided by the HisH subunit. In Rhodopseudomonas palustris (strain BisB18), this protein is Imidazole glycerol phosphate synthase subunit HisF.